Reading from the N-terminus, the 776-residue chain is Endonuclease MutS2 (776 aa).

330–337 (GPNTGGKT) is a binding site for ATP. The Smr domain occupies 701–776 (LDLRGMRYEE…GSGATIAILK (76 aa)).

This sequence belongs to the DNA mismatch repair MutS family. MutS2 subfamily. In terms of assembly, homodimer. Binds to stalled ribosomes, contacting rRNA.

Functionally, endonuclease that is involved in the suppression of homologous recombination and thus may have a key role in the control of bacterial genetic diversity. In terms of biological role, acts as a ribosome collision sensor, splitting the ribosome into its 2 subunits. Detects stalled/collided 70S ribosomes which it binds and splits by an ATP-hydrolysis driven conformational change. Acts upstream of the ribosome quality control system (RQC), a ribosome-associated complex that mediates the extraction of incompletely synthesized nascent chains from stalled ribosomes and their subsequent degradation. Probably generates substrates for RQC. This chain is Endonuclease MutS2, found in Lactococcus lactis subsp. cremoris (strain MG1363).